Reading from the N-terminus, the 352-residue chain is Pre-rRNA-processing protein ipi1 (352 aa).

Belongs to the IPI1/TEX10 family. In terms of assembly, component of the RIX1 complex, composed of rrm-9/ipi1, rix1/ipi2 and ipi3 in a 1:2:2 stoichiometry. The complex interacts (via rix1) with mdn1 (via its hexameric AAA ATPase ring) and the pre-60S ribosome particles.

It is found in the nucleus. Component of the RIX1 complex required for processing of ITS2 sequences from 35S pre-rRNA. The protein is Pre-rRNA-processing protein ipi1 (rrm-9) of Neurospora crassa (strain ATCC 24698 / 74-OR23-1A / CBS 708.71 / DSM 1257 / FGSC 987).